The sequence spans 433 residues: Enolase (433 aa).

Gln-163 contacts (2R)-2-phosphoglycerate. Glu-205 functions as the Proton donor in the catalytic mechanism. Mg(2+) contacts are provided by Asp-242, Glu-285, and Asp-312. (2R)-2-phosphoglycerate-binding residues include Lys-337, Arg-366, Ser-367, and Lys-388. Lys-337 acts as the Proton acceptor in catalysis.

This sequence belongs to the enolase family. The cofactor is Mg(2+).

Its subcellular location is the cytoplasm. The protein localises to the secreted. It localises to the cell surface. It catalyses the reaction (2R)-2-phosphoglycerate = phosphoenolpyruvate + H2O. It functions in the pathway carbohydrate degradation; glycolysis; pyruvate from D-glyceraldehyde 3-phosphate: step 4/5. Its function is as follows. Catalyzes the reversible conversion of 2-phosphoglycerate (2-PG) into phosphoenolpyruvate (PEP). It is essential for the degradation of carbohydrates via glycolysis. The chain is Enolase from Lawsonia intracellularis (strain PHE/MN1-00).